Reading from the N-terminus, the 87-residue chain is Defensin-like protein 223 (87 aa).

A signal peptide spans 1–34 (MKSTIFVLTLLIFVSLYFNIIVYVSFSFIGTSEI). 3 cysteine pairs are disulfide-bonded: C55/C72, C58/C77, and C62/C79.

This sequence belongs to the DEFL family.

Its subcellular location is the secreted. The sequence is that of Defensin-like protein 223 from Arabidopsis thaliana (Mouse-ear cress).